Consider the following 301-residue polypeptide: MPTYALLGATGATGSAILRCLLASPPPDLDLNILVRSKQKLLKSFPTLTTTISPRIHIIQGNSTDTIALQQCLEDASVAFMCVADNASNKGVSLTADTVTAIVTTLGMLRKLHGSAYNAPTILQLRSASLNPKLSCQVPRLVYNIVSFCLHYSHLDIVKACEHYEAAAAKGLLSYIYVDPPTIHDAFGPNRTGHKLISCKPDVCDKQETALSYADLGAGFVEIASRKEDFLNQPVGVTATGKAKETWGVLAGFLFDGAKGRARAWWEEERPMSKPQNLFLYCVMVSLAAVVLVQYTGTMNR.

Residues 1–23 (MPTYALLGATGATGSAILRCLLA) form the signal peptide. N62, N86, and N190 each carry an N-linked (GlcNAc...) asparagine glycan.

Belongs to the avfA family.

It participates in mycotoxin biosynthesis. Its function is as follows. Averufin oxidase A; part of the fragmented gene cluster that mediates the biosynthesis of dothistromin (DOTH), a polyketide toxin very similar in structure to the aflatoxin precursor, versicolorin B. The first step of the pathway is the conversion of acetate to norsolorinic acid (NOR) and requires the fatty acid synthase subunits hexA and hexB, as well as the polyketide synthase pksA. PksA combines a hexanoyl starter unit and 7 malonyl-CoA extender units to synthesize the precursor NOR. The hexanoyl starter unit is provided to the acyl-carrier protein (ACP) domain by the fungal fatty acid synthase hexA/hexB. The second step is the conversion of NOR to averantin (AVN) and requires the norsolorinic acid ketoreductase nor1, which catalyzes the dehydration of norsolorinic acid to form (1'S)-averantin. The cytochrome P450 monooxygenase avnA then catalyzes the hydroxylation of AVN to 5'hydroxyaverantin (HAVN). The next step is performed by adhA that transforms HAVN to averufin (AVF). Averufin might then be converted to hydroxyversicolorone by cypX and avfA. Hydroxyversicolorone is further converted versiconal hemiacetal acetate (VHA) by moxY. VHA is then the substrate for the versiconal hemiacetal acetate esterase est1 to yield versiconal (VAL). Versicolorin B synthase vbsA then converts VAL to versicolorin B (VERB) by closing the bisfuran ring. Then, the activity of the versicolorin B desaturase verB leads to versicolorin A (VERA). DotB, a predicted chloroperoxidase, may perform epoxidation of the A-ring of VERA. Alternatively, a cytochrome P450, such as cypX or avnA could catalyze this step. It is also possible that another, uncharacterized, cytochrome P450 enzyme is responsible for this step. Opening of the epoxide could potentially be achieved by the epoxide hydrolase epoA. However, epoA seems not to be required for DOTH biosynthesis, but other epoxide hydrolases may have the ability to complement this hydrolysis. Alternatively, opening of the epoxide ring could be achieved non-enzymatically. The next step is the deoxygenation of ring A to yield the 5,8-dihydroxyanthraquinone which is most likely catalyzed by the NADPH dehydrogenase encoded by ver1. The last stages of DOTH biosynthesis are proposed to involve hydroxylation of the bisfuran. OrdB and norB might have oxidative roles here. An alternative possibility is that cytochrome P450 monoogenases such as avnA and cypX might perform these steps in addition to previously proposed steps. This chain is Averufin oxidase A, found in Dothistroma septosporum (Red band needle blight fungus).